The primary structure comprises 580 residues: MELTIEEMLIKQKETGAHYTPTDLGDIIAKRLINELKKSGISGTKKIRGLDPSCGDGELLLSLNRMGKFNNIDNIELIGIDEDKEAIKEADFRLNEMGINDAKLSGGDFLDMVDLEGNLSLFDDDLSKIEPVDLIIANPPYVRTQVLGADRAQKLAKLFNLKGRVDLYHAFLVAMTLQLKPGGLIGVITSNKYLANTTGESIRQFLAENYDIIEIMDLGDTKLFSGAVLQAIFFGTKKLNKGIRQTAPANFYKIYEETDPSKTEVSIKFETLFGLLESSNTGVFNVDEKFYSVSCGKLIVPDSFKEPWVMATDEEYNWITNINNNSYCTIQDLCDLKVGIKTTADKVFIKSTWEELPDEIKPEVEVLKLLISTDHASKWRPLERIGNQKILYTHENLNGKKKAIHFTQYPHALAYLETHRETLEGRKYVIKAKRNWYQIWLPQNPDHWALPKILFPDISPEPKFFYEDEGCCIDGNCYWIIPKEENNNDILFLILGISNTKYMTNYHDIAFNNKLYPGRTRYLTQYVSNYPLPNPEANYSQEIIDVLRELLFQNPNDERKIEIENQIENLTALAFGVERL.

This sequence belongs to the N(4)/N(6)-methyltransferase family.

It carries out the reaction a 2'-deoxyadenosine in DNA + S-adenosyl-L-methionine = an N(6)-methyl-2'-deoxyadenosine in DNA + S-adenosyl-L-homocysteine + H(+). In terms of biological role, a gamma subtype methylase, recognizes the double-stranded sequence 5'-ATCGAT-3', methylates A-5 on both strands, and protects the DNA from cleavage by the BanIII endonuclease. The chain is Type II methyltransferase M.BanIII (banIIIM) from Aneurinibacillus aneurinilyticus (Bacillus aneurinolyticus).